The primary structure comprises 291 residues: Beta-lactamase CTX-M-6 (291 aa).

Residues 1–28 (MMTQSIRRSMLTVMATLPLLFSSATLHA) form the signal peptide. The Acyl-ester intermediate role is filled by Ser73. 237–239 (KTG) lines the substrate pocket.

This sequence belongs to the class-A beta-lactamase family.

The enzyme catalyses a beta-lactam + H2O = a substituted beta-amino acid. Has cefotaxime-hydrolyzing activity. In Salmonella typhimurium, this protein is Beta-lactamase CTX-M-6 (bla).